A 631-amino-acid chain; its full sequence is Phosphomethylpyrimidine synthase (631 aa).

Substrate is bound by residues Asn-239, Met-268, Tyr-297, His-333, 353–355, 394–397, and Glu-433; these read SRG and DGLR. His-437 lines the Zn(2+) pocket. A substrate-binding site is contributed by Tyr-460. His-501 is a Zn(2+) binding site. Residues Cys-581, Cys-584, and Cys-589 each coordinate [4Fe-4S] cluster.

This sequence belongs to the ThiC family. In terms of assembly, homodimer. [4Fe-4S] cluster is required as a cofactor.

The catalysed reaction is 5-amino-1-(5-phospho-beta-D-ribosyl)imidazole + S-adenosyl-L-methionine = 4-amino-2-methyl-5-(phosphooxymethyl)pyrimidine + CO + 5'-deoxyadenosine + formate + L-methionine + 3 H(+). Its pathway is cofactor biosynthesis; thiamine diphosphate biosynthesis. In terms of biological role, catalyzes the synthesis of the hydroxymethylpyrimidine phosphate (HMP-P) moiety of thiamine from aminoimidazole ribotide (AIR) in a radical S-adenosyl-L-methionine (SAM)-dependent reaction. The sequence is that of Phosphomethylpyrimidine synthase from Salmonella paratyphi A (strain AKU_12601).